The sequence spans 313 residues: Ribosomal RNA small subunit methyltransferase H (313 aa).

Residues 35–37, Asp-55, Phe-79, Asp-101, and Gln-108 each bind S-adenosyl-L-methionine; that span reads GGH. Residues 276–300 are disordered; sequence QGGPTLKSVGKMMPPDDEVADNPRA.

It belongs to the methyltransferase superfamily. RsmH family.

It localises to the cytoplasm. It carries out the reaction cytidine(1402) in 16S rRNA + S-adenosyl-L-methionine = N(4)-methylcytidine(1402) in 16S rRNA + S-adenosyl-L-homocysteine + H(+). Specifically methylates the N4 position of cytidine in position 1402 (C1402) of 16S rRNA. In Dickeya chrysanthemi (strain Ech1591) (Dickeya zeae (strain Ech1591)), this protein is Ribosomal RNA small subunit methyltransferase H.